Consider the following 439-residue polypeptide: Ornithine aminotransferase, mitochondrial (439 aa).

The N-terminal 25 residues, 1-25 (MLSKLARLQTVAGLGLGVHSSVASA), are a transit peptide targeting the mitochondrion. N6-acetyllysine is present on residues lysine 49 and lysine 66. Lysine 102 bears the N6-succinyllysine mark. N6-acetyllysine; alternate is present on lysine 107. Residue lysine 107 is modified to N6-succinyllysine; alternate. Lysine 292 is subject to N6-(pyridoxal phosphate)lysine. Lysine 362 carries the post-translational modification N6-acetyllysine; alternate. At lysine 362 the chain carries N6-succinyllysine; alternate. N6-acetyllysine occurs at positions 386 and 392. The residue at position 405 (lysine 405) is an N6-acetyllysine; alternate. Lysine 405 is modified (N6-succinyllysine; alternate). Lysine 421 bears the N6-acetyllysine mark.

It belongs to the class-III pyridoxal-phosphate-dependent aminotransferase family. As to quaternary structure, homohexamer. Requires pyridoxal 5'-phosphate as cofactor.

It localises to the mitochondrion matrix. The catalysed reaction is L-ornithine + 2-oxoglutarate = L-glutamate 5-semialdehyde + L-glutamate. It functions in the pathway amino-acid biosynthesis; L-proline biosynthesis; L-glutamate 5-semialdehyde from L-ornithine: step 1/1. Catalyzes the reversible interconversion of L-ornithine and 2-oxoglutarate to L-glutamate semialdehyde and L-glutamate. This chain is Ornithine aminotransferase, mitochondrial (OAT), found in Bos taurus (Bovine).